The sequence spans 364 residues: Paraneoplastic antigen Ma2 (364 aa).

A2 carries the N-acetylalanine modification. Residues 335–351 (EEEEASFENESIEEPEE) are compositionally biased toward acidic residues. The interval 335-364 (EEEEASFENESIEEPEERDGYGRWNHEGDD) is disordered. Residues 352-364 (RDGYGRWNHEGDD) show a composition bias toward basic and acidic residues.

This sequence belongs to the PNMA family. As to expression, brain-specific. In some cancer patients, specifically expressed by testicular tumor cells.

Its subcellular location is the nucleus. It localises to the nucleolus. This chain is Paraneoplastic antigen Ma2 (PNMA2), found in Homo sapiens (Human).